The sequence spans 103 residues: Putative membrane protein insertion efficiency factor (103 aa).

Belongs to the UPF0161 family.

It is found in the cell membrane. Functionally, could be involved in insertion of integral membrane proteins into the membrane. The chain is Putative membrane protein insertion efficiency factor from Clavibacter michiganensis subsp. michiganensis (strain NCPPB 382).